The sequence spans 1476 residues: Glucosyltransferase-I (1476 aa).

Positions 1 to 34 are cleaved as a signal peptide; it reads MDKKVRYKLRKVKKRWVTVSVASAVMTLTTLSGG. Disordered regions lie at residues 42 to 89 and 102 to 141; these read ESKS…ISSS and PYTV…TEAD. Polar residues-rich tracts occupy residues 43–81 and 102–139; these read SKSQ…QTNH and PYTV…QTTE. Cell wall-binding repeat units follow at residues 159–178 and 179–199; these read LPNV…NGKV and RTNF…TGAY. The segment at 200–1051 is catalytic; approximate; sequence TDTSIDTVNK…NTYFNISDNK (852 aa). Cell wall-binding repeat units follow at residues 1087–1106, 1107–1126, 1170–1189, 1214–1234, 1235–1254, 1279–1299, 1300–1319, 1344–1364, 1365–1384, 1409–1429, and 1430–1449; these read KNTF…NGYM, VTGA…NGLQ, SVGL…MGYQ, RNRF…DGAA, VTGS…NGVQ, RNRF…NGYA, and VTGA…NGVQ.

This sequence belongs to the glycosyl hydrolase 70 family.

It is found in the secreted. The catalysed reaction is [(1-&gt;6)-alpha-D-glucosyl](n) + sucrose = [(1-&gt;6)-alpha-D-glucosyl](n+1) + D-fructose. Functionally, production of extracellular glucans, that are thought to play a key role in the development of the dental plaque because of their ability to adhere to smooth surfaces and mediate the aggregation of bacterial cells and food debris. The polypeptide is Glucosyltransferase-I (gtfB) (Streptococcus mutans serotype c (strain ATCC 700610 / UA159)).